Here is a 352-residue protein sequence, read N- to C-terminus: Very-long-chain 3-oxoacyl-CoA reductase (352 aa).

Residues Thr20 to Leu40 traverse the membrane as a helical segment. NADP(+) is bound by residues Val66, Asp120, Asn147, Tyr228, Lys232, Val261, and Ser263. The active-site Proton donor is the Tyr228. Lys232 (lowers pKa of active site Tyr) is an active-site residue.

The protein belongs to the short-chain dehydrogenases/reductases (SDR) family.

It is found in the endoplasmic reticulum membrane. It catalyses the reaction a very-long-chain (3R)-3-hydroxyacyl-CoA + NADP(+) = a very-long-chain 3-oxoacyl-CoA + NADPH + H(+). Its pathway is lipid metabolism; fatty acid biosynthesis. In terms of biological role, component of the microsomal membrane bound fatty acid elongation system, which produces the 26-carbon very long-chain fatty acids (VLCFA) from palmitate. Catalyzes the reduction of the 3-ketoacyl-CoA intermediate that is formed in each cycle of fatty acid elongation. VLCFAs serve as precursors for ceramide and sphingolipids. The sequence is that of Very-long-chain 3-oxoacyl-CoA reductase from Candida glabrata (strain ATCC 2001 / BCRC 20586 / JCM 3761 / NBRC 0622 / NRRL Y-65 / CBS 138) (Yeast).